The sequence spans 248 residues: 1-(5-phosphoribosyl)-5-[(5-phosphoribosylamino)methylideneamino] imidazole-4-carboxamide isomerase (248 aa).

The active-site Proton acceptor is the Asp-11. Asp-132 (proton donor) is an active-site residue.

The protein belongs to the HisA/HisF family.

It is found in the cytoplasm. The catalysed reaction is 1-(5-phospho-beta-D-ribosyl)-5-[(5-phospho-beta-D-ribosylamino)methylideneamino]imidazole-4-carboxamide = 5-[(5-phospho-1-deoxy-D-ribulos-1-ylimino)methylamino]-1-(5-phospho-beta-D-ribosyl)imidazole-4-carboxamide. It participates in amino-acid biosynthesis; L-histidine biosynthesis; L-histidine from 5-phospho-alpha-D-ribose 1-diphosphate: step 4/9. The protein is 1-(5-phosphoribosyl)-5-[(5-phosphoribosylamino)methylideneamino] imidazole-4-carboxamide isomerase of Bradyrhizobium diazoefficiens (strain JCM 10833 / BCRC 13528 / IAM 13628 / NBRC 14792 / USDA 110).